Reading from the N-terminus, the 429-residue chain is tRNA(Ile2) 2-agmatinylcytidine synthetase TiaS (429 aa).

Residues lysine 403–leucine 429 are disordered.

It belongs to the TiaS family.

It is found in the cytoplasm. The enzyme catalyses cytidine(34) in tRNA(Ile2) + agmatine + ATP + H2O = 2-agmatinylcytidine(34) in tRNA(Ile2) + AMP + 2 phosphate + 2 H(+). Its function is as follows. ATP-dependent agmatine transferase that catalyzes the formation of 2-agmatinylcytidine (agm2C) at the wobble position (C34) of tRNA(Ile2), converting the codon specificity from AUG to AUA. The sequence is that of tRNA(Ile2) 2-agmatinylcytidine synthetase TiaS from Hyperthermus butylicus (strain DSM 5456 / JCM 9403 / PLM1-5).